We begin with the raw amino-acid sequence, 873 residues long: Protein SEY1 (873 aa).

Positions 1-20 (MVANGHFAGSADGQHSSSYE) are disordered. Over 1–749 (MVANGHFAGS…KRSAIGGITQ (749 aa)) the chain is Cytoplasmic. The GB1/RHD3-type G domain maps to 49–307 (GFNYHLISVF…IPADGFAVYA (259 aa)). 59–66 (GSQSTGKS) lines the GTP pocket. The stretch at 482-506 (SNYQQELSLYQKDLERTSGQLRRDE) forms a coiled coil. Residues 677–703 (DKWIGHTPSSATPADEEDLTPIGGVDD) are disordered. The span at 690–703 (ADEEDLTPIGGVDD) shows a compositional bias: acidic residues. A helical membrane pass occupies residues 750–770 (VPLYFYGLLFALGWNEILAVL). At 771-773 (RNP) the chain is on the lumenal side. Residues 774 to 794 (VYFLLLFVCAIGAYITYQLNL) form a helical membrane-spanning segment. Residues 795 to 873 (WGPIIKMTEA…EDVDDDDDDF (79 aa)) lie on the Cytoplasmic side of the membrane. The tract at residues 828–873 (RQAMAMSGARNATEEHEMSRLSRKPAERGGRKNRADEDVDDDDDDF) is disordered. The span at 839-863 (ATEEHEMSRLSRKPAERGGRKNRAD) shows a compositional bias: basic and acidic residues. Residues 864–873 (EDVDDDDDDF) are compositionally biased toward acidic residues.

The protein belongs to the TRAFAC class dynamin-like GTPase superfamily. GB1/RHD3 GTPase family. RHD3 subfamily.

The protein localises to the endoplasmic reticulum membrane. Cooperates with the reticulon proteins and tubule-shaping DP1 family proteins to generate and maintain the structure of the tubular endoplasmic reticulum network. Has GTPase activity, which is required for its function in ER organization. This Ajellomyces capsulatus (strain NAm1 / WU24) (Darling's disease fungus) protein is Protein SEY1.